A 387-amino-acid polypeptide reads, in one-letter code: Zinc homeostasis factor 1 (387 aa).

4 consecutive transmembrane segments (helical) span residues 10–30 (IILLLGIDVTFFFIEIITGYA), 34–54 (LALIADSFHMLNDIVSLLVAL), 77–97 (EILGALSNGVFLIALCMFIFM), and 113–133 (TLMFFVGSLGLLSNFVGIFLF). Over residues 195-214 (SYTGNHNGAGTSKPVNNHGS) the composition is skewed to polar residues. The disordered stretch occupies residues 195-221 (SYTGNHNGAGTSKPVNNHGSIEQDAPK). Transmembrane regions (helical) follow at residues 234–254 (FLHVLGDALGNIGVISAALFI) and 263–283 (FLFDPCISILLTFIILFSAIP).

This sequence belongs to the cation diffusion facilitator (CDF) transporter (TC 2.A.4) family. SLC30A subfamily.

Its subcellular location is the endoplasmic reticulum membrane. It localises to the nucleus membrane. In terms of biological role, involved in zinc homeostasis, where it plays a role in its accumulation in the endoplasmic reticulum/nucleus. Also has a role in the sequestration of cadmium into the endoplasmic reticulum. This is Zinc homeostasis factor 1 (zhf1) from Schizosaccharomyces pombe (strain 972 / ATCC 24843) (Fission yeast).